The following is a 147-amino-acid chain: Small ribosomal subunit protein bS6 (147 aa).

The interval 107 to 147 (KEGRERKARPARAERRDDTEAEDLSDEEGVEAEDFEEEQGV) is disordered. Acidic residues predominate over residues 125–147 (TEAEDLSDEEGVEAEDFEEEQGV).

The protein belongs to the bacterial ribosomal protein bS6 family.

Functionally, binds together with bS18 to 16S ribosomal RNA. The polypeptide is Small ribosomal subunit protein bS6 (Cellvibrio japonicus (strain Ueda107) (Pseudomonas fluorescens subsp. cellulosa)).